A 273-amino-acid polypeptide reads, in one-letter code: Shikimate dehydrogenase (NADP(+)) (273 aa).

Shikimate-binding positions include 15–17 (SKS) and T62. K66 acts as the Proton acceptor in catalysis. Residue E78 coordinates NADP(+). The shikimate site is built by N87 and D103. NADP(+)-binding positions include 127–131 (GAGGA), 150–155 (NRTQEK), and M213. Y215 provides a ligand contact to shikimate. NADP(+) is bound at residue G237.

Belongs to the shikimate dehydrogenase family. Homodimer.

The catalysed reaction is shikimate + NADP(+) = 3-dehydroshikimate + NADPH + H(+). It functions in the pathway metabolic intermediate biosynthesis; chorismate biosynthesis; chorismate from D-erythrose 4-phosphate and phosphoenolpyruvate: step 4/7. Involved in the biosynthesis of the chorismate, which leads to the biosynthesis of aromatic amino acids. Catalyzes the reversible NADPH linked reduction of 3-dehydroshikimate (DHSA) to yield shikimate (SA). This is Shikimate dehydrogenase (NADP(+)) from Shewanella woodyi (strain ATCC 51908 / MS32).